Reading from the N-terminus, the 152-residue chain is Psoriasis susceptibility 1 candidate gene 1 protein (152 aa).

The span at Met1–Pro31 shows a compositional bias: polar residues. The segment at Met1–Asn42 is disordered.

Expressed in skin. Also found in heart, placenta, liver, skeletal muscle and pancreas.

The chain is Psoriasis susceptibility 1 candidate gene 1 protein (PSORS1C1) from Homo sapiens (Human).